We begin with the raw amino-acid sequence, 272 residues long: Glutamate racemase (272 aa).

Residues 13-14 (DS) and 45-46 (YG) contribute to the substrate site. The Proton donor/acceptor role is filled by Cys-76. Residue 77-78 (NT) coordinates substrate. Residue Cys-187 is the Proton donor/acceptor of the active site. Residue 188–189 (TH) participates in substrate binding.

It belongs to the aspartate/glutamate racemases family.

It catalyses the reaction L-glutamate = D-glutamate. It participates in cell wall biogenesis; peptidoglycan biosynthesis. In terms of biological role, provides the (R)-glutamate required for cell wall biosynthesis. The protein is Glutamate racemase of Roseiflexus sp. (strain RS-1).